The primary structure comprises 284 residues: NAD/NADP-dependent indole-3-acetaldehyde reductase (284 aa).

Residue Asp-49 coordinates NADPH. Residues Tyr-54 and His-109 each act as proton donor in the active site. NADPH is bound by residues Ser-143, Gln-165, Leu-196, Arg-201, Thr-239, Thr-240, Thr-241, Ser-242, Lys-243, and Arg-246.

The protein belongs to the aldo/keto reductase family. Monomer.

It is found in the cytoplasm. The protein resides in the nucleus. It carries out the reaction indole-3-ethanol + NAD(+) = indole-3-acetaldehyde + NADH + H(+). The catalysed reaction is indole-3-ethanol + NADP(+) = indole-3-acetaldehyde + NADPH + H(+). The polypeptide is NAD/NADP-dependent indole-3-acetaldehyde reductase (Schizosaccharomyces pombe (strain 972 / ATCC 24843) (Fission yeast)).